The primary structure comprises 236 residues: Uridylate kinase (236 aa).

K8–G11 is an ATP binding site. G51 is a binding site for UMP. Positions 52 and 56 each coordinate ATP. UMP is bound by residues D71 and T133–T140. ATP-binding residues include N161, F167, and D170.

Belongs to the UMP kinase family. Homohexamer.

The protein resides in the cytoplasm. The enzyme catalyses UMP + ATP = UDP + ADP. It functions in the pathway pyrimidine metabolism; CTP biosynthesis via de novo pathway; UDP from UMP (UMPK route): step 1/1. Its activity is regulated as follows. Inhibited by UTP. Functionally, catalyzes the reversible phosphorylation of UMP to UDP. The chain is Uridylate kinase from Mesomycoplasma hyopneumoniae (strain 232) (Mycoplasma hyopneumoniae).